The primary structure comprises 361 residues: MDSLPTSQRAVVQSEDVGSFEISRGRPIPVPSSSQILIKVFAVALNHCDWKMPARVPCPGTVDGADYSGTIIALGDTAALTSGFKIGDRVAGAQMASQRRRPWVGAFTEYILEEADSAWLVPDSLSWEEAAAIGCAATSSVGMALWKSLNLPGTPQNPITEDGKYVLVYGGSSASGTFAIQLLRLSGYNVVTTCSPKNFGLVESYGAEKAFDYHSPTCGEDIRTYTGNTLEYALDIITEAKTIRHCYAAIGRGGGRYCGFELLPHDLIATMRRSVKAEWVNGLEMTGLEIDLPGGYYCKANPELHIWFADLIKQYSVLISQGKLRPHPIQINKGGLEKVIDGLGQMKRREISGKKMVYPLV.

The Enoyl reductase (ER) domain occupies 15–357 (EDVGSFEISR…RREISGKKMV (343 aa)). NADP(+) is bound by residues 48–51 (CDWK), 172–175 (SSAS), 195–198 (SPKN), Y213, 260–261 (FE), and 351–352 (IS).

It belongs to the zinc-containing alcohol dehydrogenase family. In terms of assembly, monomer.

It functions in the pathway mycotoxin biosynthesis. In terms of biological role, trans-enoyl reductasee; part of the gene cluster that mediates the biosynthesis of GKK1032, fungal natural products containing a macrocyclic para-cyclophane connected to a decahydrofluorene ring system that show potent antitumor activities. Within the pathway, the PKS-NRPS gkaA, with the help of the trans-enoyl reductase gkaC, synthesize the polyketide-tyrosyl acyl thioester product which can be reductively off-loaded by the terminal reductase (R) domain in gkaA. The PKS module of gkaA acts in combination with the trans-acting enoyl reductase gkaC to produce a methylated polyketide attached to the ACP domain. In parallel, the adenylation (A) domain of the NRPS module activated L-tyrosine, which is then transferred to the ACP domain. The condensation (C) domain subsequently links this group to the polyketide chain, forming an enzyme-bound amide. The alpha/beta hydrolase gkaG is then required to catalyze the subsequent Knoevenagel condensation that affords the 3-pyrrolin-2-one ring, whereas the three proteins gkaB, gkadX and gkaZ then function synergistically to form the cyclophane. This Penicillium citrinum protein is Trans-enoyl reductase gkaC.